Here is a 121-residue protein sequence, read N- to C-terminus: Small ribosomal subunit protein bS6 (121 aa).

This sequence belongs to the bacterial ribosomal protein bS6 family.

In terms of biological role, binds together with bS18 to 16S ribosomal RNA. The protein is Small ribosomal subunit protein bS6 of Rickettsia canadensis (strain McKiel).